A 157-amino-acid chain; its full sequence is Ribonuclease (157 aa).

An N-terminal signal peptide occupies residues methionine 1 to alanine 34. A propeptide spanning residues alanine 35–glutamate 47 is cleaved from the precursor. Residue glutamate 120 is the Proton acceptor of the active site. The active-site Proton donor is the histidine 149.

This sequence belongs to the ribonuclease N1/T1 family.

The protein resides in the secreted. In terms of biological role, hydrolyzes phosphodiester bonds in RNA, poly- and oligoribonucleotides resulting in 3'-nucleoside monophosphates via 2',3'-cyclophosphate intermediates. In Bacillus amyloliquefaciens (Bacillus velezensis), this protein is Ribonuclease.